A 286-amino-acid polypeptide reads, in one-letter code: tRNA uridine(34) hydroxylase (286 aa).

A Rhodanese domain is found at 130-225 (RGDDVVFFDG…YGETFGDRGL (96 aa)). The active-site Cysteine persulfide intermediate is Cys185.

Belongs to the TrhO family.

It catalyses the reaction uridine(34) in tRNA + AH2 + O2 = 5-hydroxyuridine(34) in tRNA + A + H2O. Functionally, catalyzes oxygen-dependent 5-hydroxyuridine (ho5U) modification at position 34 in tRNAs. The chain is tRNA uridine(34) hydroxylase from Rhodococcus erythropolis (strain PR4 / NBRC 100887).